A 101-amino-acid polypeptide reads, in one-letter code: Small ribosomal subunit protein uS14A (101 aa).

The interval 31-74 is disordered; the sequence is IRKPSTPEADRAAAQAALQRLPRDASPVRLRNRDAADGRPRGHL. Over residues 61–70 the composition is skewed to basic and acidic residues; sequence RNRDAADGRP.

The protein belongs to the universal ribosomal protein uS14 family. As to quaternary structure, part of the 30S ribosomal subunit. Contacts proteins S3 and S10.

Functionally, binds 16S rRNA, required for the assembly of 30S particles and may also be responsible for determining the conformation of the 16S rRNA at the A site. The chain is Small ribosomal subunit protein uS14A from Nocardia farcinica (strain IFM 10152).